Here is a 140-residue protein sequence, read N- to C-terminus: Putative esterase MT1895 (140 aa).

The protein belongs to the thioesterase PaaI family.

The polypeptide is Putative esterase MT1895 (Mycobacterium tuberculosis (strain CDC 1551 / Oshkosh)).